The sequence spans 712 residues: Patatin-like phospholipase domain-containing protein ACLA_029670 (712 aa).

Residues methionine 1–arginine 10 show a composition bias toward polar residues. The segment at methionine 1–aspartate 20 is disordered. A helical transmembrane segment spans residues tryptophan 85–threonine 105. Residues leucine 275–asparagine 466 form the PNPLA domain. Residues glycine 306 to glycine 310 carry the GXSXG motif. Serine 308 (nucleophile) is an active-site residue. Residue aspartate 453 is the Proton acceptor of the active site. Over residues phenylalanine 649–glutamate 664 the composition is skewed to basic and acidic residues. A disordered region spans residues phenylalanine 649 to isoleucine 686. The span at valine 665–proline 676 shows a compositional bias: polar residues. Residues histidine 677–isoleucine 686 show a composition bias toward basic and acidic residues.

Belongs to the PLPL family.

Its subcellular location is the membrane. Functionally, probable lipid hydrolase. The chain is Patatin-like phospholipase domain-containing protein ACLA_029670 from Aspergillus clavatus (strain ATCC 1007 / CBS 513.65 / DSM 816 / NCTC 3887 / NRRL 1 / QM 1276 / 107).